Here is a 1104-residue protein sequence, read N- to C-terminus: Partner and localizer of BRCA2 (1104 aa).

Residues 1–157 form a required for its oligomerization and is important for its focal concentration at DNA damage sites region; the sequence is MEELSGKPLS…WEKSSVSQEK (157 aa). The tract at residues 1–195 is interaction with RAD51; sequence MEELSGKPLS…TPVSEKTHLL (195 aa). The segment at 1–308 is interaction with BRCA1; that stretch reads MEELSGKPLS…RAHGQLPGSP (308 aa). Positions 9-48 form a coiled coil; that stretch reads LSYAEKEKLKEKLAFLKKEYSRTLARLQRAKRAEKAKNSK. The segment covering 39 to 52 has biased composition (basic and acidic residues); the sequence is KRAEKAKNSKKAIE. Disordered stretches follow at residues 39–91, 122–157, and 243–272; these read KRAE…TGEN, GQLL…SQEK, and PSCT…TQGP. Composition is skewed to polar residues over residues 59 to 70 and 138 to 154; these read EASSQLSHSESI and NTLP…SSVS. Ser-274 carries the phosphoserine modification. A disordered region spans residues 304-354; that stretch reads LPGSPNSCSVNDLTHSNLPANSTPNSKSLKSPSNTVDERNEPLQEDEILGP. Residues 306 to 338 are compositionally biased toward polar residues; that stretch reads GSPNSCSVNDLTHSNLPANSTPNSKSLKSPSNT. Ser-364 bears the Phosphoserine mark. Positions 374-424 are chAM (Chromatin-association motif); required for chromatin association, mediates nucleosome association; the sequence is SCTMLEGLLFPAEYYVRTTRRMSDCQRKIALEAVIQSHLGVKKKELKKKTK. Disordered regions lie at residues 417–494 and 581–730; these read KELK…SART and LQRD…TPLP. Phosphoserine is present on Ser-432. Low complexity predominate over residues 446–462; that stretch reads TSTGQSSSGSLSQKLLS. The segment covering 483-492 has biased composition (basic residues); it reads RGHRGKRKSA. The span at 664–713 shows a compositional bias: polar residues; it reads TLSTEAAQPCSTSQPPLLGDTNSLVNNSKQCNSSACSPKPDTNLQASGRQ. Positions 693 to 1104 are required for interaction with POLH and POLH DNA synthesis stimulation; sequence QCNSSACSPK…DGNIFIYRYF (412 aa). The interaction with RAD51 and BRCA2 stretch occupies residues 771–1104; that stretch reads GNLQLVSELK…DGNIFIYRYF (334 aa). The tract at residues 771 to 1104 is interaction with RAD51, BRCA2 and POLH; it reads GNLQLVSELK…DGNIFIYRYF (334 aa). 7 WD repeats span residues 772-833, 835-879, 880-927, 928-970, 976-1027, 1033-1071, and 1073-1104; these read NLQL…WHFT, VPVL…QVLL, KSGD…LMPP, DETV…MHID, SVCH…LLCS, AGRF…LLPP, and SDQS…YRYF.

As to quaternary structure, homooligomer; dissociated upon DNA damage thus allowing association with BRCA1. Oligomerization is essential for its focal accumulation at DNA breaks. Part of a BRCA complex containing BRCA1, BRCA2 and PALB2. Interacts with BRCA1 and this interaction is essential for its function in HRR. Interacts with RAD51AP1 and MORF4L1/MRG15. Component of the homologous recombination repair (HR) complex composed of ERCC5/XPG, BRCA2, PALB2, DSS1 and RAD51. Within the complex, interacts with ERCC5/XPG and BRCA2. Interacts with BRCA2, RAD51C, RAD51 and XRCC3; the interactions are direct and it may serve as a scaffold for a HR complex containing PALB2, BRCA2, RAD51C, RAD51 and XRCC3. Interacts with POLH; the interaction is direct.

It localises to the nucleus. Functionally, plays a critical role in homologous recombination repair (HRR) through its ability to recruit BRCA2 and RAD51 to DNA breaks. Strongly stimulates the DNA strand-invasion activity of RAD51, stabilizes the nucleoprotein filament against a disruptive BRC3-BRC4 polypeptide and helps RAD51 to overcome the suppressive effect of replication protein A (RPA). Functionally cooperates with RAD51AP1 in promoting of D-loop formation by RAD51. Serves as the molecular scaffold in the formation of the BRCA1-PALB2-BRCA2 complex which is essential for homologous recombination. Via its WD repeats is proposed to scaffold a HR complex containing RAD51C and BRCA2 which is thought to play a role in HR-mediated DNA repair. Essential partner of BRCA2 that promotes the localization and stability of BRCA2. Also enables its recombinational repair and checkpoint functions of BRCA2. May act by promoting stable association of BRCA2 with nuclear structures, allowing BRCA2 to escape the effects of proteasome-mediated degradation. Binds DNA with high affinity for D loop, which comprises single-stranded, double-stranded and branched DNA structures. May play a role in the extension step after strand invasion at replication-dependent DNA double-strand breaks; together with BRCA2 is involved in both POLH localization at collapsed replication forks and DNA polymerization activity. The sequence is that of Partner and localizer of BRCA2 (Palb2) from Mus musculus (Mouse).